Here is a 226-residue protein sequence, read N- to C-terminus: Ribonuclease 3 (226 aa).

Residues 6 to 128 (ANKIQQILGY…LIGSIYLDSN (123 aa)) enclose the RNase III domain. E41 is a Mg(2+) binding site. D45 is an active-site residue. N114 and E117 together coordinate Mg(2+). Residue E117 is part of the active site. The DRBM domain occupies 155–225 (DPKTRLQEYL…ARKALIKLGV (71 aa)).

This sequence belongs to the ribonuclease III family. In terms of assembly, homodimer. The cofactor is Mg(2+).

The protein resides in the cytoplasm. The catalysed reaction is Endonucleolytic cleavage to 5'-phosphomonoester.. In terms of biological role, digests double-stranded RNA. Involved in the processing of primary rRNA transcript to yield the immediate precursors to the large and small rRNAs (23S and 16S). Processes some mRNAs, and tRNAs when they are encoded in the rRNA operon. Processes pre-crRNA and tracrRNA of type II CRISPR loci if present in the organism. The chain is Ribonuclease 3 from Buchnera aphidicola subsp. Schizaphis graminum (strain Sg).